Consider the following 159-residue polypeptide: Thioredoxin O2, mitochondrial (159 aa).

The residue at position 40 (serine 40) is a Phosphoserine. Residues 43-159 (FAEGDRSSFV…LKSVMEQLYK (117 aa)) enclose the Thioredoxin domain. Residues cysteine 83 and cysteine 86 each act as nucleophile in the active site. Residues cysteine 83 and cysteine 86 are joined by a disulfide bond.

The protein belongs to the thioredoxin family. Plant O-type subfamily.

The protein resides in the mitochondrion. Thiol-disulfide oxidoreductase that may participate in various redox reactions. Possesses insulin disulfide bonds reducing activity. Reduced by thioredoxin reductases NTRA and NTRB. This Arabidopsis thaliana (Mouse-ear cress) protein is Thioredoxin O2, mitochondrial.